Reading from the N-terminus, the 492-residue chain is UPF0236 protein TTE0402 (492 aa).

The protein belongs to the UPF0236 family.

In Caldanaerobacter subterraneus subsp. tengcongensis (strain DSM 15242 / JCM 11007 / NBRC 100824 / MB4) (Thermoanaerobacter tengcongensis), this protein is UPF0236 protein TTE0402.